The primary structure comprises 394 residues: Acetate kinase (394 aa).

A Mg(2+)-binding site is contributed by Asn-7. Position 14 (Lys-14) interacts with ATP. Position 88 (Arg-88) interacts with substrate. Asp-145 acts as the Proton donor/acceptor in catalysis. ATP contacts are provided by residues 205-209 (HLGNG), 279-281 (DFR), and 327-331 (GIGEN). Position 379 (Glu-379) interacts with Mg(2+).

It belongs to the acetokinase family. In terms of assembly, homodimer. It depends on Mg(2+) as a cofactor. Mn(2+) is required as a cofactor.

It localises to the cytoplasm. It carries out the reaction acetate + ATP = acetyl phosphate + ADP. The protein operates within metabolic intermediate biosynthesis; acetyl-CoA biosynthesis; acetyl-CoA from acetate: step 1/2. In terms of biological role, catalyzes the formation of acetyl phosphate from acetate and ATP. Can also catalyze the reverse reaction. In Campylobacter lari (strain RM2100 / D67 / ATCC BAA-1060), this protein is Acetate kinase.